We begin with the raw amino-acid sequence, 180 residues long: ATP-dependent protease subunit HslV (180 aa).

T5 is a catalytic residue. 3 residues coordinate Na(+): G165, C168, and T171.

The protein belongs to the peptidase T1B family. HslV subfamily. A double ring-shaped homohexamer of HslV is capped on each side by a ring-shaped HslU homohexamer. The assembly of the HslU/HslV complex is dependent on binding of ATP.

The protein resides in the cytoplasm. The catalysed reaction is ATP-dependent cleavage of peptide bonds with broad specificity.. Allosterically activated by HslU binding. Protease subunit of a proteasome-like degradation complex believed to be a general protein degrading machinery. This Helicobacter acinonychis (strain Sheeba) protein is ATP-dependent protease subunit HslV.